The following is a 74-amino-acid chain: Ubiquitin-like protein FUBI (74 aa).

This sequence belongs to the ubiquitin family.

The protein is Ubiquitin-like protein FUBI (Fau) of Rattus norvegicus (Rat).